The following is a 186-amino-acid chain: Lipid A acyltransferase PagP (186 aa).

A signal peptide spans 1 to 25; that stretch reads MNVSKYVAIFSFVFIQLISVGKVFA. Active-site residues include H58, D101, and S102.

This sequence belongs to the lipid A palmitoyltransferase family. Homodimer.

It localises to the cell outer membrane. The enzyme catalyses a lipid A + a 1,2-diacyl-sn-glycero-3-phosphocholine = a hepta-acyl lipid A + a 2-acyl-sn-glycero-3-phosphocholine. It catalyses the reaction a lipid IVA + a 1,2-diacyl-sn-glycero-3-phosphocholine = a lipid IVB + a 2-acyl-sn-glycero-3-phosphocholine. It carries out the reaction a lipid IIA + a 1,2-diacyl-sn-glycero-3-phosphocholine = a lipid IIB + a 2-acyl-sn-glycero-3-phosphocholine. Transfers a fatty acid residue from the sn-1 position of a phospholipid to the N-linked hydroxyfatty acid chain on the proximal unit of lipid A or its precursors. This is Lipid A acyltransferase PagP from Shigella boydii serotype 4 (strain Sb227).